We begin with the raw amino-acid sequence, 415 residues long: Gamma-glutamyl phosphate reductase (415 aa).

Belongs to the gamma-glutamyl phosphate reductase family.

The protein resides in the cytoplasm. The catalysed reaction is L-glutamate 5-semialdehyde + phosphate + NADP(+) = L-glutamyl 5-phosphate + NADPH + H(+). It functions in the pathway amino-acid biosynthesis; L-proline biosynthesis; L-glutamate 5-semialdehyde from L-glutamate: step 2/2. Catalyzes the NADPH-dependent reduction of L-glutamate 5-phosphate into L-glutamate 5-semialdehyde and phosphate. The product spontaneously undergoes cyclization to form 1-pyrroline-5-carboxylate. This chain is Gamma-glutamyl phosphate reductase, found in Mycolicibacterium gilvum (strain PYR-GCK) (Mycobacterium gilvum (strain PYR-GCK)).